The sequence spans 548 residues: MAKELRFGDDARLQMLAGVNALADAVQVTMGPRGRNVVLEKSYGAPTVTKDGVSVAKEIEFEHRFMNMGAQMVKEVASKTSDTAGDGTTTATVLARSILVEGHKAVAAGMNPMDLKRGIDKAVLAVTKKLQAMSKPCKDSKAIAQVGTISANSDEAIGAIIAEAMEKVGKEGVITVEDGNGLENELSVVEGMQFDRGYISPYFINNQQNMSCELEHPFILLVDKKVSSIREMLSVLEGVAKSGRPLLIIAEDVEGEALATLVVNNMRGIVKVCAVKAPGFGDRRKAMLQDIAILTKGQVISEEIGKSLEGATLEDLGSAKRIVVTKENTTVIDGEGKATEINARIAQIRAQMEETTSDYDREKLQERVAKLAGGVAVIKVGAATEVEMKEKKARVEDALHATRAAVEEGIVAGGGVALIRAQKALDSLKGDNDDQNMGINILRRAIESPMRQIVTNAGYEASVVVNKVAEHKDNYGFNAATGEYGDMVEMGILDPTKVTRMALQNAASVASLMLTTECMVADLPKKEEGVGAGDMGGMGGMGGMGGMM.

ATP contacts are provided by residues T29–P32, K50, D86–T90, G414, N478–A480, and D494.

It belongs to the chaperonin (HSP60) family. Forms a cylinder of 14 subunits composed of two heptameric rings stacked back-to-back. Interacts with the co-chaperonin GroES.

It is found in the cytoplasm. The enzyme catalyses ATP + H2O + a folded polypeptide = ADP + phosphate + an unfolded polypeptide.. In terms of biological role, together with its co-chaperonin GroES, plays an essential role in assisting protein folding. The GroEL-GroES system forms a nano-cage that allows encapsulation of the non-native substrate proteins and provides a physical environment optimized to promote and accelerate protein folding. The polypeptide is Chaperonin GroEL (Legionella pneumophila (strain Corby)).